The chain runs to 99 residues: A-type ATP synthase subunit F (99 aa).

This sequence belongs to the V-ATPase F subunit family. Has multiple subunits with at least A(3), B(3), C, D, E, F, H, I and proteolipid K(x).

The protein localises to the cell membrane. Its function is as follows. Component of the A-type ATP synthase that produces ATP from ADP in the presence of a proton gradient across the membrane. This is A-type ATP synthase subunit F from Methanocella arvoryzae (strain DSM 22066 / NBRC 105507 / MRE50).